A 475-amino-acid polypeptide reads, in one-letter code: Crocetin glucosyltransferase 3 (475 aa).

The Proton acceptor role is filled by His16. His16 contributes to the an anthocyanidin binding site. Catalysis depends on Asp123, which acts as the Charge relay. Positions 144, 354, 356, 371, 374, 375, 376, and 379 each coordinate UDP-alpha-D-glucose. Ala394 serves as a coordination point for an anthocyanidin. Residues Glu395 and Gln396 each coordinate UDP-alpha-D-glucose.

It belongs to the UDP-glycosyltransferase family. Mainly expressed in stamens.

It carries out the reaction crocetin + UDP-alpha-D-glucose = beta-D-glucosyl crocetin + UDP. The catalysed reaction is beta-D-glucosyl crocetin + UDP-alpha-D-glucose = bis(beta-D-glucosyl) crocetin + UDP. The enzyme catalyses beta-D-gentiobiosyl crocetin + UDP-alpha-D-glucose = beta-D-gentiobiosyl beta-D-glucosyl crocetin + UDP. Functionally, crocetin glucosyltransferase involved in the synthesis of crocin, one of the apocarotenoids responsible for the color and bitter taste of saffron. The polypeptide is Crocetin glucosyltransferase 3 (GLT3) (Crocus sativus (Saffron)).